We begin with the raw amino-acid sequence, 406 residues long: Putative odorant receptor 65b (406 aa).

The Cytoplasmic portion of the chain corresponds to 1-55 (MDIQRFLKFYKVGWKTYRDPLMEASHSSIYYWREQMKAMALFTTTEERLLPYRSK). The chain crosses the membrane as a helical span at residues 56 to 76 (WHTLVYIQMVIFFASMSFGLT). The Extracellular portion of the chain corresponds to 77–88 (ESMGDHVQMGRD). Residues 89 to 109 (LAFILGAFFIIFKTYYFCWYG) traverse the membrane as a helical segment. Residues 110–144 (DELDQVISDLDALHPWAQKGPNPVEYQTGKRWYFV) lie on the Cytoplasmic side of the membrane. A helical membrane pass occupies residues 145–165 (MAFFLATSWSFFLCILLLLLI). At 166 to 218 (TSPMWVHQQNLPFHAAFPFQWHEKSLHPISHAIIYLFQSYFAVYCLTWLLCIE) the chain is on the extracellular side. The helical transmembrane segment at 219 to 239 (GLSICIYAEITFGIEVLCLEL) threads the bilayer. Over 240–275 (RQIHRHNYGLQELRMETNRLVKLHQKIVEILDRTND) the chain is Cytoplasmic. The chain crosses the membrane as a helical span at residues 276–296 (VFHGTLIMQMGVNFSLVSLSV). Residues 297–307 (LEAVEARKDPK) lie on the Extracellular side of the membrane. Residues 308–328 (VVAQFAVLMLLALGHLSMWSY) traverse the membrane as a helical segment. The Cytoplasmic segment spans residues 329 to 381 (CGDQLSQKSLQISEAAYEAYDPTKGSKDVYRDLCVIIRRGQDPLIMRASPFPS). The chain crosses the membrane as a helical span at residues 382–402 (FNLINYSAILNQCYGILTFLL). At 403–406 (KTLD) the chain is on the extracellular side.

The protein belongs to the insect chemoreceptor superfamily. Heteromeric odorant receptor channel (TC 1.A.69) family. Or49a subfamily. Interacts with Orco. Complexes exist early in the endomembrane system in olfactory sensory neurons (OSNs), coupling these complexes to the conserved ciliary trafficking pathway.

The protein resides in the cell membrane. Functionally, odorant receptor which mediates acceptance or avoidance behavior, depending on its substrates. The odorant receptor repertoire encodes a large collection of odor stimuli that vary widely in identity, intensity, and duration. May form a complex with Orco to form odorant-sensing units, providing sensitive and prolonged odorant signaling and calcium permeability. In Drosophila melanogaster (Fruit fly), this protein is Putative odorant receptor 65b (Or65b).